The following is a 38-amino-acid chain: ATP synthase subunit O, mitochondrial (38 aa).

Belongs to the ATPase delta chain family. As to quaternary structure, F-type ATPases have 2 components, CF(1) - the catalytic core - and CF(0) - the membrane proton channel. CF(1) has five subunits: alpha(3), beta(3), gamma(1), delta(1), epsilon(1). CF(0) has three main subunits: a, b and c.

Its subcellular location is the mitochondrion. It localises to the mitochondrion inner membrane. Functionally, mitochondrial membrane ATP synthase (F(1)F(0) ATP synthase or Complex V) produces ATP from ADP in the presence of a proton gradient across the membrane which is generated by electron transport complexes of the respiratory chain. F-type ATPases consist of two structural domains, F(1) - containing the extramembraneous catalytic core and F(0) - containing the membrane proton channel, linked together by a central stalk and a peripheral stalk. During catalysis, ATP synthesis in the catalytic domain of F(1) is coupled via a rotary mechanism of the central stalk subunits to proton translocation. Part of the complex F(0) domain and the peripheric stalk, which acts as a stator to hold the catalytic alpha(3)beta(3) subcomplex and subunit a/ATP6 static relative to the rotary elements. This chain is ATP synthase subunit O, mitochondrial, found in Pisum sativum (Garden pea).